A 221-amino-acid polypeptide reads, in one-letter code: Lipoprotein-releasing system ATP-binding protein LolD (221 aa).

The region spanning 6 to 220 is the ABC transporter domain; sequence LILKKISKHY…YNLKNGLLNI (215 aa). An ATP-binding site is contributed by 42-49; the sequence is GSSGSGKS.

Belongs to the ABC transporter superfamily. Lipoprotein translocase (TC 3.A.1.125) family. In terms of assembly, the complex is composed of two ATP-binding proteins (LolD) and two transmembrane proteins (LolC and LolE).

The protein resides in the cell inner membrane. Functionally, part of the ABC transporter complex LolCDE involved in the translocation of mature outer membrane-directed lipoproteins, from the inner membrane to the periplasmic chaperone, LolA. Responsible for the formation of the LolA-lipoprotein complex in an ATP-dependent manner. The chain is Lipoprotein-releasing system ATP-binding protein LolD from Rickettsia typhi (strain ATCC VR-144 / Wilmington).